A 431-amino-acid polypeptide reads, in one-letter code: Argininosuccinate lyase (431 aa).

Belongs to the lyase 1 family. Argininosuccinate lyase subfamily.

It localises to the cytoplasm. The catalysed reaction is 2-(N(omega)-L-arginino)succinate = fumarate + L-arginine. Its pathway is amino-acid biosynthesis; L-arginine biosynthesis; L-arginine from L-ornithine and carbamoyl phosphate: step 3/3. This Xanthomonas campestris pv. campestris (strain B100) protein is Argininosuccinate lyase.